Reading from the N-terminus, the 361-residue chain is Queuine tRNA-ribosyltransferase (361 aa).

Residue aspartate 92 is the Proton acceptor of the active site. Substrate-binding positions include 92-96 (DSGGF), aspartate 146, glutamine 189, and glycine 216. The interval 247-253 (GVGKPAD) is RNA binding. The Nucleophile role is filled by aspartate 266. The interval 271–275 (TRAGR) is RNA binding; important for wobble base 34 recognition. Zn(2+) contacts are provided by cysteine 304, cysteine 306, cysteine 309, and histidine 335.

This sequence belongs to the queuine tRNA-ribosyltransferase family. In terms of assembly, homodimer. Within each dimer, one monomer is responsible for RNA recognition and catalysis, while the other monomer binds to the replacement base PreQ1. The cofactor is Zn(2+).

The enzyme catalyses 7-aminomethyl-7-carbaguanine + guanosine(34) in tRNA = 7-aminomethyl-7-carbaguanosine(34) in tRNA + guanine. It participates in tRNA modification; tRNA-queuosine biosynthesis. Its function is as follows. Catalyzes the base-exchange of a guanine (G) residue with the queuine precursor 7-aminomethyl-7-deazaguanine (PreQ1) at position 34 (anticodon wobble position) in tRNAs with GU(N) anticodons (tRNA-Asp, -Asn, -His and -Tyr). Catalysis occurs through a double-displacement mechanism. The nucleophile active site attacks the C1' of nucleotide 34 to detach the guanine base from the RNA, forming a covalent enzyme-RNA intermediate. The proton acceptor active site deprotonates the incoming PreQ1, allowing a nucleophilic attack on the C1' of the ribose to form the product. After dissociation, two additional enzymatic reactions on the tRNA convert PreQ1 to queuine (Q), resulting in the hypermodified nucleoside queuosine (7-(((4,5-cis-dihydroxy-2-cyclopenten-1-yl)amino)methyl)-7-deazaguanosine). This Rickettsia massiliae (strain Mtu5) protein is Queuine tRNA-ribosyltransferase.